The chain runs to 451 residues: Ammonium transporter Rh type B (451 aa).

Residues 1–11 (MADVSTSMRLK) lie on the Cytoplasmic side of the membrane. A helical transmembrane segment spans residues 12–32 (LPVVCFILEIILIILFGALVQ). Residues 33–63 (YDYETDAKEWHNQSHNDYENDFYFRYPSFQD) lie on the Extracellular side of the membrane. An N-linked (GlcNAc...) asparagine glycan is attached at Asn44. A helical transmembrane segment spans residues 64–84 (VHVMIFIGFGFLMTFLQKYGF). The Cytoplasmic portion of the chain corresponds to 85-87 (GSV). The helical transmembrane segment at 88 to 108 (GFNFLIAAFSLQWATLMQGFF) threads the bilayer. Residues 109–121 (HGMHGGKIHVGVE) are Extracellular-facing. Residues 122-142 (SMINADFCTGSVLISFGAVLG) form a helical membrane-spanning segment. The Cytoplasmic portion of the chain corresponds to 143–151 (KTSPIQLLT). The helical transmembrane segment at 152–172 (MAMFEVTLFAVNEFILLSLLG) threads the bilayer. The Extracellular portion of the chain corresponds to 173–176 (TRDA). A helical transmembrane segment spans residues 177–197 (GGSMTIHTFGAYFGLMVTRIL). The Cytoplasmic portion of the chain corresponds to 198–216 (YRPHLDKSKHRNSSVYHSD). Residues 217–237 (LFAMIGTIYLWMFWPSFNSAI) traverse the membrane as a helical segment. Topologically, residues 238–247 (TAHGDDQHRT) are extracellular. A helical transmembrane segment spans residues 248–270 (ALNTYYSLAACTLATYGMSAVTS). Residues 271 to 274 (HDGK) lie on the Cytoplasmic side of the membrane. The chain crosses the membrane as a helical span at residues 275 to 295 (LDMVHIQNAALAGGVAVGTAG). The Extracellular segment spans residues 296–298 (EMM). Residues 299–319 (LTPFGSMIVGFLAGIISVLGF) traverse the membrane as a helical segment. The Cytoplasmic segment spans residues 320-340 (KFLSPILESKLKIQDTCGVHN). The helical transmembrane segment at 341–361 (LHGMPGVLGAIVGAVTAALAT) threads the bilayer. The Extracellular segment spans residues 362–390 (MDVYGKGMEDVFPAVADGSIDASKQGGVQ). A helical transmembrane segment spans residues 391–411 (ALSLAITLGIALLGGLIVVFG). Topologically, residues 412–451 (TPPDTLCFEDGVYWEVPESEAPHEAQLTTVRTEETEKLSS) are cytoplasmic.

Belongs to the ammonium transporter (TC 2.A.49) family. Rh subfamily.

The protein localises to the basolateral cell membrane. The protein resides in the cytoplasmic vesicle membrane. Its function is as follows. Functions as an ammonia transporter. May play a role in the elimination of ammonia in the gill. The protein is Ammonium transporter Rh type B (rhbg) of Tetraodon nigroviridis (Spotted green pufferfish).